The following is a 259-amino-acid chain: Imidazole glycerol phosphate synthase subunit HisF (259 aa).

Active-site residues include aspartate 11 and aspartate 130.

It belongs to the HisA/HisF family. Heterodimer of HisH and HisF.

The protein localises to the cytoplasm. It catalyses the reaction 5-[(5-phospho-1-deoxy-D-ribulos-1-ylimino)methylamino]-1-(5-phospho-beta-D-ribosyl)imidazole-4-carboxamide + L-glutamine = D-erythro-1-(imidazol-4-yl)glycerol 3-phosphate + 5-amino-1-(5-phospho-beta-D-ribosyl)imidazole-4-carboxamide + L-glutamate + H(+). It functions in the pathway amino-acid biosynthesis; L-histidine biosynthesis; L-histidine from 5-phospho-alpha-D-ribose 1-diphosphate: step 5/9. Its function is as follows. IGPS catalyzes the conversion of PRFAR and glutamine to IGP, AICAR and glutamate. The HisF subunit catalyzes the cyclization activity that produces IGP and AICAR from PRFAR using the ammonia provided by the HisH subunit. The polypeptide is Imidazole glycerol phosphate synthase subunit HisF (Chloroflexus aurantiacus (strain ATCC 29366 / DSM 635 / J-10-fl)).